Consider the following 213-residue polypeptide: Kiwellin (213 aa).

Residues 1–24 (MAQLSLLVLSLFLTLISLPPPGAS) form the signal peptide. Disulfide bonds link Cys-28/Cys-60, Cys-32/Cys-44, and Cys-38/Cys-49. 4-hydroxyproline occurs at positions 65 and 67. 4 cysteine pairs are disulfide-bonded: Cys-72–Cys-90, Cys-80–Cys-172, Cys-119–Cys-144, and Cys-166–Cys-182. Positions 91-121 (SPPVTSSTPAKLTNNDFSEGGDGGGPSECDE) are disordered. Positions 93 to 107 (PVTSSTPAKLTNNDF) are enriched in polar residues.

This sequence belongs to the kiwellin family. Post-translationally, undergoes proteolytic cleavage by actinidin to produce kissper and KiTH. Three forms of KiTH are produced by cleavage at different sites.

Its subcellular location is the secreted. Its function is as follows. Kissper is an anion-selective pore-forming peptide. The polypeptide is Kiwellin (Actinidia chinensis var. chinensis (Chinese soft-hair kiwi)).